A 514-amino-acid polypeptide reads, in one-letter code: UDP-N-acetylmuramate--L-alanine ligase (514 aa).

127-133 (GTHGKTT) serves as a coordination point for ATP. The span at 495–505 (IGGTIPDIPGG) shows a compositional bias: low complexity. A disordered region spans residues 495-514 (IGGTIPDIPGGSTPDASAAG).

It belongs to the MurCDEF family.

It is found in the cytoplasm. It carries out the reaction UDP-N-acetyl-alpha-D-muramate + L-alanine + ATP = UDP-N-acetyl-alpha-D-muramoyl-L-alanine + ADP + phosphate + H(+). It participates in cell wall biogenesis; peptidoglycan biosynthesis. Its function is as follows. Cell wall formation. The polypeptide is UDP-N-acetylmuramate--L-alanine ligase (Salinispora tropica (strain ATCC BAA-916 / DSM 44818 / JCM 13857 / NBRC 105044 / CNB-440)).